A 392-amino-acid chain; its full sequence is Formate-dependent phosphoribosylglycinamide formyltransferase (392 aa).

Residues 22-23 and Glu82 contribute to the N(1)-(5-phospho-beta-D-ribosyl)glycinamide site; that span reads EL. ATP-binding positions include Arg114, Lys155, 160–165, 195–198, and Glu203; these read SSGKGQ and EGVV. Positions 119–308 constitute an ATP-grasp domain; it reads RLAAEELGLP…EFALHVRAFL (190 aa). Mg(2+) is bound by residues Glu267 and Glu279. Residues Asp286, Lys355, and 362 to 363 each bind N(1)-(5-phospho-beta-D-ribosyl)glycinamide; that span reads RR.

It belongs to the PurK/PurT family. In terms of assembly, homodimer.

It catalyses the reaction N(1)-(5-phospho-beta-D-ribosyl)glycinamide + formate + ATP = N(2)-formyl-N(1)-(5-phospho-beta-D-ribosyl)glycinamide + ADP + phosphate + H(+). It participates in purine metabolism; IMP biosynthesis via de novo pathway; N(2)-formyl-N(1)-(5-phospho-D-ribosyl)glycinamide from N(1)-(5-phospho-D-ribosyl)glycinamide (formate route): step 1/1. Involved in the de novo purine biosynthesis. Catalyzes the transfer of formate to 5-phospho-ribosyl-glycinamide (GAR), producing 5-phospho-ribosyl-N-formylglycinamide (FGAR). Formate is provided by PurU via hydrolysis of 10-formyl-tetrahydrofolate. The protein is Formate-dependent phosphoribosylglycinamide formyltransferase of Salmonella paratyphi B (strain ATCC BAA-1250 / SPB7).